Here is a 318-residue protein sequence, read N- to C-terminus: Aspartate carbamoyltransferase catalytic subunit (318 aa).

Carbamoyl phosphate-binding residues include Arg-58 and Thr-59. L-aspartate is bound at residue Lys-86. Arg-108, His-141, and Gln-144 together coordinate carbamoyl phosphate. Arg-174 and Arg-226 together coordinate L-aspartate. Carbamoyl phosphate contacts are provided by Gly-270 and Pro-271.

It belongs to the aspartate/ornithine carbamoyltransferase superfamily. ATCase family. As to quaternary structure, heterododecamer (2C3:3R2) of six catalytic PyrB chains organized as two trimers (C3), and six regulatory PyrI chains organized as three dimers (R2).

The enzyme catalyses carbamoyl phosphate + L-aspartate = N-carbamoyl-L-aspartate + phosphate + H(+). It participates in pyrimidine metabolism; UMP biosynthesis via de novo pathway; (S)-dihydroorotate from bicarbonate: step 2/3. Functionally, catalyzes the condensation of carbamoyl phosphate and aspartate to form carbamoyl aspartate and inorganic phosphate, the committed step in the de novo pyrimidine nucleotide biosynthesis pathway. This Lactobacillus helveticus (strain DPC 4571) protein is Aspartate carbamoyltransferase catalytic subunit.